Here is a 214-residue protein sequence, read N- to C-terminus: Pyridoxine/pyridoxamine 5'-phosphate oxidase (214 aa).

Residues 9 to 12 (RRSY) and Lys68 contribute to the substrate site. FMN-binding positions include 63–68 (RVVLLK), 78–79 (YT), Lys85, and Gln107. Residues Tyr125, Arg129, and Ser133 each coordinate substrate. FMN is bound by residues 142–143 (QS) and Trp187. A substrate-binding site is contributed by 193–195 (RLH). Residue Arg197 coordinates FMN.

Belongs to the pyridoxamine 5'-phosphate oxidase family. Homodimer. The cofactor is FMN.

It catalyses the reaction pyridoxamine 5'-phosphate + O2 + H2O = pyridoxal 5'-phosphate + H2O2 + NH4(+). It carries out the reaction pyridoxine 5'-phosphate + O2 = pyridoxal 5'-phosphate + H2O2. The protein operates within cofactor metabolism; pyridoxal 5'-phosphate salvage; pyridoxal 5'-phosphate from pyridoxamine 5'-phosphate: step 1/1. Its pathway is cofactor metabolism; pyridoxal 5'-phosphate salvage; pyridoxal 5'-phosphate from pyridoxine 5'-phosphate: step 1/1. Catalyzes the oxidation of either pyridoxine 5'-phosphate (PNP) or pyridoxamine 5'-phosphate (PMP) into pyridoxal 5'-phosphate (PLP). This chain is Pyridoxine/pyridoxamine 5'-phosphate oxidase, found in Christiangramia forsetii (strain DSM 17595 / CGMCC 1.15422 / KT0803) (Gramella forsetii).